The following is a 299-amino-acid chain: Probable lipid kinase YegS (299 aa).

One can recognise a DAGKc domain in the interval Ala2–Thr133. ATP contacts are provided by residues Thr40, Gly66–Glu72, and Thr95. Leu215, Asp218, and Leu220 together coordinate Mg(2+). Catalysis depends on Glu271, which acts as the Proton acceptor.

The protein belongs to the diacylglycerol/lipid kinase family. YegS lipid kinase subfamily. Requires Mg(2+) as cofactor. It depends on Ca(2+) as a cofactor.

It is found in the cytoplasm. In terms of biological role, probably phosphorylates lipids; the in vivo substrate is unknown. This chain is Probable lipid kinase YegS, found in Escherichia coli O45:K1 (strain S88 / ExPEC).